The primary structure comprises 89 residues: Small ribosomal subunit protein uS15 (89 aa).

It belongs to the universal ribosomal protein uS15 family. Part of the 30S ribosomal subunit. Forms a bridge to the 50S subunit in the 70S ribosome, contacting the 23S rRNA.

In terms of biological role, one of the primary rRNA binding proteins, it binds directly to 16S rRNA where it helps nucleate assembly of the platform of the 30S subunit by binding and bridging several RNA helices of the 16S rRNA. Forms an intersubunit bridge (bridge B4) with the 23S rRNA of the 50S subunit in the ribosome. The polypeptide is Small ribosomal subunit protein uS15 (Bartonella bacilliformis (strain ATCC 35685 / KC583 / Herrer 020/F12,63)).